Reading from the N-terminus, the 472-residue chain is Aspartyl/glutamyl-tRNA(Asn/Gln) amidotransferase subunit B (472 aa).

Belongs to the GatB/GatE family. GatB subfamily. Heterotrimer of A, B and C subunits.

It catalyses the reaction L-glutamyl-tRNA(Gln) + L-glutamine + ATP + H2O = L-glutaminyl-tRNA(Gln) + L-glutamate + ADP + phosphate + H(+). The catalysed reaction is L-aspartyl-tRNA(Asn) + L-glutamine + ATP + H2O = L-asparaginyl-tRNA(Asn) + L-glutamate + ADP + phosphate + 2 H(+). Functionally, allows the formation of correctly charged Asn-tRNA(Asn) or Gln-tRNA(Gln) through the transamidation of misacylated Asp-tRNA(Asn) or Glu-tRNA(Gln) in organisms which lack either or both of asparaginyl-tRNA or glutaminyl-tRNA synthetases. The reaction takes place in the presence of glutamine and ATP through an activated phospho-Asp-tRNA(Asn) or phospho-Glu-tRNA(Gln). This chain is Aspartyl/glutamyl-tRNA(Asn/Gln) amidotransferase subunit B, found in Elusimicrobium minutum (strain Pei191).